The following is a 300-amino-acid chain: Integrin-binding sialoprotein (300 aa).

A disordered region spans residues 41-258; it reads RFPVQSSSDS…YEQTGAHEYD (218 aa). Residues S46, S51, S59, S60, S82, and S90 each carry the phosphoserine modification. Residues 46-58 are compositionally biased toward low complexity; it reads SSSDSSEENGNGD. The span at 59–92 shows a compositional bias: acidic residues; that stretch reads SSEEEEEEEENSNEEENNEENEDSDGNEDEDSEA. Residues 93–102 are compositionally biased toward polar residues; sequence ENITLSTTTL. A glycan (N-linked (GlcNAc...) asparagine) is linked at N94. The segment covering 125–136 has biased composition (basic and acidic residues); the sequence is KAGDIGKKSAKE. The span at 137–160 shows a compositional bias: acidic residues; the sequence is EESDEDEEEEEENEENEAEVDDNE. Phosphoserine is present on S139. 3 stretches are compositionally biased toward polar residues: residues 161–173, 193–202, and 229–243; these read QGTN…STEV, VTEAQGTTVA, and ISGT…TTTP. 2 N-linked (GlcNAc...) asparagine glycosylation sites follow: N164 and N169. S266 is subject to Phosphoserine. The short motif at 272-274 is the Integrin-binding motif element; the sequence is RGD. The residue at position 293 (S293) is a Phosphoserine. Residues Y299 and Y300 each carry the sulfotyrosine modification.

As to quaternary structure, monomer. Interacts with integrins; the interaction promotes cell adhesion.

It localises to the secreted. Its function is as follows. Binds tightly to hydroxyapatite. Appears to form an integral part of the mineralized matrix. Probably important to cell-matrix interaction. Promotes adhesion and migration of various cells via the alpha-V/beta-3 integrin receptor (ITGAV:ITGB3). This is Integrin-binding sialoprotein (IBSP) from Sus scrofa (Pig).